The sequence spans 506 residues: 2,3-bisphosphoglycerate-independent phosphoglycerate mutase (506 aa).

Mn(2+) contacts are provided by Asp-13 and Ser-63. Ser-63 serves as the catalytic Phosphoserine intermediate. Substrate-binding positions include His-124, 153-154 (RD), Arg-183, Arg-189, 254-257 (RADR), and Lys-330. Mn(2+) is bound by residues Asp-396, His-400, Asp-437, His-438, and His-456.

Belongs to the BPG-independent phosphoglycerate mutase family. In terms of assembly, monomer. Mn(2+) is required as a cofactor.

It carries out the reaction (2R)-2-phosphoglycerate = (2R)-3-phosphoglycerate. It functions in the pathway carbohydrate degradation; glycolysis; pyruvate from D-glyceraldehyde 3-phosphate: step 3/5. Its function is as follows. Catalyzes the interconversion of 2-phosphoglycerate and 3-phosphoglycerate. The sequence is that of 2,3-bisphosphoglycerate-independent phosphoglycerate mutase from Cereibacter sphaeroides (strain ATCC 17029 / ATH 2.4.9) (Rhodobacter sphaeroides).